The following is an 860-amino-acid chain: Leucine--tRNA ligase (860 aa).

A 'HIGH' region motif is present at residues P42–H52. The short motif at K619–S623 is the 'KMSKS' region element. K622 serves as a coordination point for ATP.

This sequence belongs to the class-I aminoacyl-tRNA synthetase family.

It is found in the cytoplasm. The catalysed reaction is tRNA(Leu) + L-leucine + ATP = L-leucyl-tRNA(Leu) + AMP + diphosphate. The sequence is that of Leucine--tRNA ligase from Yersinia pseudotuberculosis serotype O:3 (strain YPIII).